The sequence spans 361 residues: 5-formaminoimidazole-4-carboxamide-1-(beta)-D-ribofuranosyl 5'-monophosphate synthetase (361 aa).

5-amino-1-(5-phospho-beta-D-ribosyl)imidazole-4-carboxamide contacts are provided by His-27 and Ser-94. The ATP-grasp domain maps to 116-348; sequence RAILRWEAER…MGQRIAKEIK (233 aa). ATP contacts are provided by residues 146-208 and Glu-230; that span reads PDDI…ANYC. A 5-amino-1-(5-phospho-beta-D-ribosyl)imidazole-4-carboxamide-binding site is contributed by Asn-258. Mg(2+) is bound by residues Gln-297 and Glu-310.

This sequence belongs to the phosphohexose mutase family. It depends on Mg(2+) as a cofactor. The cofactor is Mn(2+).

It catalyses the reaction 5-amino-1-(5-phospho-beta-D-ribosyl)imidazole-4-carboxamide + formate + ATP = 5-formamido-1-(5-phospho-D-ribosyl)imidazole-4-carboxamide + ADP + phosphate. Its pathway is purine metabolism; IMP biosynthesis via de novo pathway; 5-formamido-1-(5-phospho-D-ribosyl)imidazole-4-carboxamide from 5-amino-1-(5-phospho-D-ribosyl)imidazole-4-carboxamide (formate route): step 1/1. Functionally, catalyzes the ATP- and formate-dependent formylation of 5-aminoimidazole-4-carboxamide-1-beta-d-ribofuranosyl 5'-monophosphate (AICAR) to 5-formaminoimidazole-4-carboxamide-1-beta-d-ribofuranosyl 5'-monophosphate (FAICAR) in the absence of folates. The protein is 5-formaminoimidazole-4-carboxamide-1-(beta)-D-ribofuranosyl 5'-monophosphate synthetase of Methanococcus maripaludis (strain C6 / ATCC BAA-1332).